A 70-amino-acid chain; its full sequence is Small ribosomal subunit protein bS21 (70 aa).

It belongs to the bacterial ribosomal protein bS21 family.

In Nitratiruptor sp. (strain SB155-2), this protein is Small ribosomal subunit protein bS21.